A 212-amino-acid chain; its full sequence is Large ribosomal subunit protein uL3 (212 aa).

An N5-methylglutamine modification is found at Q153.

It belongs to the universal ribosomal protein uL3 family. As to quaternary structure, part of the 50S ribosomal subunit. Forms a cluster with proteins L14 and L19. Post-translationally, methylated by PrmB.

One of the primary rRNA binding proteins, it binds directly near the 3'-end of the 23S rRNA, where it nucleates assembly of the 50S subunit. This is Large ribosomal subunit protein uL3 from Shewanella frigidimarina (strain NCIMB 400).